The chain runs to 313 residues: Formimidoylglutamase (313 aa).

Residues H130, D155, H157, D159, D241, and D243 each contribute to the Mn(2+) site.

It belongs to the arginase family. Mn(2+) serves as cofactor.

It carries out the reaction N-formimidoyl-L-glutamate + H2O = formamide + L-glutamate. Its pathway is amino-acid degradation; L-histidine degradation into L-glutamate; L-glutamate from N-formimidoyl-L-glutamate (hydrolase route): step 1/1. In terms of biological role, catalyzes the conversion of N-formimidoyl-L-glutamate to L-glutamate and formamide. The chain is Formimidoylglutamase from Salmonella enteritidis PT4 (strain P125109).